Here is a 165-residue protein sequence, read N- to C-terminus: 6,7-dimethyl-8-ribityllumazine synthase (165 aa).

5-amino-6-(D-ribitylamino)uracil is bound by residues Phe-22, 56-58, and 80-82; these read SME and AVI. 85-86 contributes to the (2S)-2-hydroxy-3-oxobutyl phosphate binding site; sequence ET. His-88 (proton donor) is an active-site residue. Phe-113 is a 5-amino-6-(D-ribitylamino)uracil binding site. Position 127 (Arg-127) interacts with (2S)-2-hydroxy-3-oxobutyl phosphate.

The protein belongs to the DMRL synthase family.

It catalyses the reaction (2S)-2-hydroxy-3-oxobutyl phosphate + 5-amino-6-(D-ribitylamino)uracil = 6,7-dimethyl-8-(1-D-ribityl)lumazine + phosphate + 2 H2O + H(+). Its pathway is cofactor biosynthesis; riboflavin biosynthesis; riboflavin from 2-hydroxy-3-oxobutyl phosphate and 5-amino-6-(D-ribitylamino)uracil: step 1/2. Its function is as follows. Catalyzes the formation of 6,7-dimethyl-8-ribityllumazine by condensation of 5-amino-6-(D-ribitylamino)uracil with 3,4-dihydroxy-2-butanone 4-phosphate. This is the penultimate step in the biosynthesis of riboflavin. This chain is 6,7-dimethyl-8-ribityllumazine synthase, found in Thermotoga petrophila (strain ATCC BAA-488 / DSM 13995 / JCM 10881 / RKU-1).